The following is a 308-amino-acid chain: Protoheme IX farnesyltransferase (308 aa).

The next 8 membrane-spanning stretches (helical) occupy residues 31–51 (VIEL…RGTV), 53–73 (PLLI…ANTL), 102–122 (HALI…WLST), 124–144 (LLSG…YTML), 149–169 (TSQN…IGWS), 170–190 (AVTG…FFWT), 242–262 (LATG…FLVM), and 288–308 (YLAV…PTLL).

The protein belongs to the UbiA prenyltransferase family. Protoheme IX farnesyltransferase subfamily.

The protein resides in the cell membrane. It catalyses the reaction heme b + (2E,6E)-farnesyl diphosphate + H2O = Fe(II)-heme o + diphosphate. It functions in the pathway porphyrin-containing compound metabolism; heme O biosynthesis; heme O from protoheme: step 1/1. Converts heme B (protoheme IX) to heme O by substitution of the vinyl group on carbon 2 of heme B porphyrin ring with a hydroxyethyl farnesyl side group. The protein is Protoheme IX farnesyltransferase of Mycolicibacterium smegmatis (strain ATCC 700084 / mc(2)155) (Mycobacterium smegmatis).